A 104-amino-acid polypeptide reads, in one-letter code: uncharacterized protein (104 aa).

This is an uncharacterized protein from Mycobacterium tuberculosis (strain CDC 1551 / Oshkosh).